The following is a 434-amino-acid chain: D-amino acid dehydrogenase (434 aa).

Residue 3–17 (VVILGSGVVGVASAW) coordinates FAD.

The protein belongs to the DadA oxidoreductase family. The cofactor is FAD.

It carries out the reaction a D-alpha-amino acid + A + H2O = a 2-oxocarboxylate + AH2 + NH4(+). It functions in the pathway amino-acid degradation; D-alanine degradation; NH(3) and pyruvate from D-alanine: step 1/1. Its function is as follows. Oxidative deamination of D-amino acids. This chain is D-amino acid dehydrogenase, found in Serratia proteamaculans (strain 568).